The chain runs to 405 residues: Glucose-1-phosphate adenylyltransferase 1 (405 aa).

Alpha-D-glucose 1-phosphate-binding positions include Tyr96, Gly161, 176 to 177 (EK), and Ser194.

It belongs to the bacterial/plant glucose-1-phosphate adenylyltransferase family. Homotetramer.

It catalyses the reaction alpha-D-glucose 1-phosphate + ATP + H(+) = ADP-alpha-D-glucose + diphosphate. Its pathway is glycan biosynthesis; glycogen biosynthesis. In terms of biological role, involved in the biosynthesis of ADP-glucose, a building block required for the elongation reactions to produce glycogen. Catalyzes the reaction between ATP and alpha-D-glucose 1-phosphate (G1P) to produce pyrophosphate and ADP-Glc. The chain is Glucose-1-phosphate adenylyltransferase 1 from Vibrio vulnificus (strain YJ016).